Here is a 412-residue protein sequence, read N- to C-terminus: Subtilisin-like protease 6 (412 aa).

The first 20 residues, 1–20 (MGFITKAIPIVLAALSTVNG), serve as a signal peptide directing secretion. A propeptide spanning residues 21 to 127 (ARILEAGPHA…VRATTNGTNL (107 aa)) is cleaved from the precursor. An Inhibitor I9 domain is found at 36–120 (KYIVVMKKDV…FIEPDFVVRA (85 aa)). Asn123 and Asn126 each carry an N-linked (GlcNAc...) asparagine glycan. Residues 135–412 (SWGLARVSTR…SKLIYNGSGK (278 aa)) form the Peptidase S8 domain. Residues Asp167 and His198 each act as charge relay system in the active site. Asn252, Asn264, and Asn325 each carry an N-linked (GlcNAc...) asparagine glycan. Ser358 functions as the Charge relay system in the catalytic mechanism. N-linked (GlcNAc...) asparagine glycosylation occurs at Asn408.

Belongs to the peptidase S8 family.

The protein localises to the secreted. Functionally, secreted subtilisin-like serine protease with keratinolytic activity that contributes to pathogenicity. The protein is Subtilisin-like protease 6 (SUB6) of Trichophyton verrucosum (Cattle ringworm fungus).